The following is a 109-amino-acid chain: SIAFSRAVLSEFLATLLFVFFGLGSALNWPQALPSVLQIAMAFGLAIGTLVQTLGHISGAHINPAVTIACLVGCHVSFLRALFYLAAQLLGAVAGAALLHELTPPDIRG.

The Cytoplasmic segment spans residues 1–6; the sequence is SIAFSR. The chain crosses the membrane as a helical span at residues 7–27; that stretch reads AVLSEFLATLLFVFFGLGSAL. Over 28–35 the chain is Extracellular; it reads NWPQALPS. The chain crosses the membrane as a helical span at residues 36-54; that stretch reads VLQIAMAFGLAIGTLVQTL. Residues 55–59 lie on the Cytoplasmic side of the membrane; the sequence is GHISG. Residues 60–69 constitute an intramembrane region (discontinuously helical); it reads AHINPAVTIA. Residues 63–65 carry the NPA 1 motif; sequence NPA. At 70–80 the chain is on the cytoplasmic side; that stretch reads CLVGCHVSFLR. The helical transmembrane segment at 81–102 threads the bilayer; sequence ALFYLAAQLLGAVAGAALLHEL. The Extracellular segment spans residues 103–109; sequence TPPDIRG.

This sequence belongs to the MIP/aquaporin (TC 1.A.8) family. As to quaternary structure, homotetramer. In terms of processing, serine phosphorylation is necessary and sufficient for expression at the apical membrane. Endocytosis is not phosphorylation-dependent. N-glycosylated.

The protein resides in the apical cell membrane. The protein localises to the basolateral cell membrane. It is found in the cell membrane. It localises to the cytoplasmic vesicle membrane. Its subcellular location is the golgi apparatus. The protein resides in the trans-Golgi network membrane. The enzyme catalyses H2O(in) = H2O(out). It carries out the reaction glycerol(in) = glycerol(out). In terms of biological role, forms a water-specific channel that provides the plasma membranes of renal collecting duct with high permeability to water, thereby permitting water to move in the direction of an osmotic gradient. Plays an essential role in renal water homeostasis. Could also be permeable to glycerol. The protein is Aquaporin-2 of Procavia capensis habessinica (Abyssinian hyrax).